Here is a 324-residue protein sequence, read N- to C-terminus: Envelope protein H3 (324 aa).

At 1-284 (MAAVKTPVIV…FTTPLISFFG (284 aa)) the chain is on the virion surface side. A helical; Signal-anchor transmembrane segment spans residues 285 to 305 (LFDINVIGLIVILFIMFMLIF). Topologically, residues 306–324 (NVKSKLLWFLTGTFVTAFI) are intravirion.

This sequence belongs to the orthopoxvirus OPG108 family. Post-translationally, does not contain disulfide bonds.

Its subcellular location is the virion membrane. Envelope protein that binds to heparan sulfate on the cell surface and might provide virion attachment to target cell. The polypeptide is Envelope protein H3 (OPG108) (Homo sapiens (Human)).